The sequence spans 292 residues: Troponin I (292 aa).

N-acetylserine is present on serine 1. Residues 1 to 149 form a disordered region; that stretch reads SSLEERRAAR…GLGGLSPEKK (149 aa). A compositionally biased stretch (low complexity) spans 46–55; sequence YSAPAEPAYD. The segment covering 58-134 has biased composition (basic and acidic residues); the sequence is AENRRRQQQE…EARRMAEEQK (77 aa). The segment at 237–250 is actin-binding; the sequence is DTKGKFVKPVLRKV. The disordered stretch occupies residues 255–292; it reads SKLDKIQRKEAKKSDFRDNLKSSREHEADKEGGEGENE.

Belongs to the troponin I family.

In terms of biological role, troponin I is the inhibitory subunit of troponin, the thin filament regulatory complex which confers calcium-sensitivity to striated muscle actomyosin ATPase activity. The polypeptide is Troponin I (Chlamys nipponensis akazara (Akazara scallop)).